The following is a 225-amino-acid chain: uncharacterized protein (225 aa).

Helical transmembrane passes span 40 to 60, 63 to 83, 151 to 171, and 176 to 196; these read LISL…LSIV, LAFF…PFSF, LSET…LTIL, and IFSL…IVSL.

The protein localises to the membrane. This is an uncharacterized protein from Saccharomyces cerevisiae (strain ATCC 204508 / S288c) (Baker's yeast).